The sequence spans 493 residues: Ubiquitin carboxyl-terminal hydrolase 14 (493 aa).

Residues 4 to 80 (YSVTVKWGKE…MMGSADALPE (77 aa)) form the Ubiquitin-like domain. The residue at position 52 (Thr52) is a Phosphothreonine. The USP domain maps to 105-482 (CGLTNLGNTC…IAYVLLYGPR (378 aa)). Cys114 serves as the catalytic Nucleophile. A phosphoserine mark is found at Ser143 and Ser148. Thr235 carries the phosphothreonine modification. Phosphoserine occurs at positions 237, 302, and 431. His434 (proton acceptor) is an active-site residue. Lys448 is modified (N6-acetyllysine).

It belongs to the peptidase C19 family. USP14/UBP6 subfamily. As to quaternary structure, homodimer (Potential). Associates with the 26S proteasome. Interacts with FANCC, CXCR4 and ERN1. Interacts with TRIM14; this interaction recruits USP14 to cleave ubiquitin chains of CGAS and KDM4D.

The protein resides in the cytoplasm. It is found in the cell membrane. It catalyses the reaction Thiol-dependent hydrolysis of ester, thioester, amide, peptide and isopeptide bonds formed by the C-terminal Gly of ubiquitin (a 76-residue protein attached to proteins as an intracellular targeting signal).. In terms of biological role, proteasome-associated deubiquitinase which releases ubiquitin from the proteasome targeted ubiquitinated proteins. Ensures the regeneration of ubiquitin at the proteasome. Is a reversibly associated subunit of the proteasome and a large fraction of proteasome-free protein exists within the cell. Required for the degradation of the chemokine receptor CXCR4 which is critical for CXCL12-induced cell chemotaxis. Also serves as a physiological inhibitor of endoplasmic reticulum-associated degradation (ERAD) under the non-stressed condition by inhibiting the degradation of unfolded endoplasmic reticulum proteins via interaction with ERN1. Indispensable for synaptic development and function at neuromuscular junctions (NMJs). Plays a role in the innate immune defense against viruses by stabilizing the viral DNA sensor CGAS and thus inhibiting its autophagic degradation. Inhibits OPTN-mediated selective autophagic degradation of KDM4D and thereby negatively regulates H3K9me2 and H3K9me3. In Mus musculus (Mouse), this protein is Ubiquitin carboxyl-terminal hydrolase 14 (Usp14).